A 341-amino-acid chain; its full sequence is MQEGELAISPISPVAAMPPLGTHVQARCEAQINLLGEGGICKLPGRLRIQPALWSREDVLHWLRWAEQEYSLPCTAEHGFEMNGRALCILTKDDFRHRAPSSGDVLYELLQYIKTQRRALVCGPFFGGIFRLKTPTQHSPVPPEEVTGPSQMDTRRGHLLQPPDPGLTSNFGHLDDPGLARWTPGKEESLNLCHCAELGCRTQGVCSFPAMPQAPIDGRIADCRLLWDYVYQLLLDTRYEPYIKWEDKDAKIFRVVDPNGLARLWGNHKNRVNMTYEKMSRALRHYYKLNIIKKEPGQKLLFRFLKTPGKMVQDKHSHLEPLESQEQDRIEFKDKRPEISP.

Residues 33–117 form the PNT domain; that stretch reads NLLGEGGICK…ELLQYIKTQR (85 aa). The segment at residues 224 to 305 is a DNA-binding region (ETS); that stretch reads RLLWDYVYQL…PGQKLLFRFL (82 aa). Residues 315-341 are disordered; that stretch reads KHSHLEPLESQEQDRIEFKDKRPEISP.

Belongs to the ETS family. As to expression, expressed in hematopoietic tissues.

It is found in the nucleus. In terms of biological role, transcriptional repressor; binds to the DNA sequence 5'-CCGGAAGT-3'. Isoform A does not seem to have a repressor activity. Isoform C does not seem to have a repressor activity. This Homo sapiens (Human) protein is Transcription factor ETV7 (ETV7).